The sequence spans 157 residues: 2-C-methyl-D-erythritol 2,4-cyclodiphosphate synthase (157 aa).

Residues Asp8 and His10 each contribute to the a divalent metal cation site. 4-CDP-2-C-methyl-D-erythritol 2-phosphate is bound by residues 8–10 (DVH) and 34–35 (HS). Residue His42 coordinates a divalent metal cation. Residues 56-58 (DIG), 61-65 (FPDTD), 100-106 (AQAPKMA), 132-135 (TTSE), Phe139, and Arg142 contribute to the 4-CDP-2-C-methyl-D-erythritol 2-phosphate site.

It belongs to the IspF family. As to quaternary structure, homotrimer. It depends on a divalent metal cation as a cofactor.

It carries out the reaction 4-CDP-2-C-methyl-D-erythritol 2-phosphate = 2-C-methyl-D-erythritol 2,4-cyclic diphosphate + CMP. Its pathway is isoprenoid biosynthesis; isopentenyl diphosphate biosynthesis via DXP pathway; isopentenyl diphosphate from 1-deoxy-D-xylulose 5-phosphate: step 4/6. Functionally, involved in the biosynthesis of isopentenyl diphosphate (IPP) and dimethylallyl diphosphate (DMAPP), two major building blocks of isoprenoid compounds. Catalyzes the conversion of 4-diphosphocytidyl-2-C-methyl-D-erythritol 2-phosphate (CDP-ME2P) to 2-C-methyl-D-erythritol 2,4-cyclodiphosphate (ME-CPP) with a corresponding release of cytidine 5-monophosphate (CMP). The sequence is that of 2-C-methyl-D-erythritol 2,4-cyclodiphosphate synthase from Photobacterium profundum (strain SS9).